A 558-amino-acid polypeptide reads, in one-letter code: Nucleoprotein (558 aa).

The tract at residues 54–237 is binding site for the cap structure m7GTP; it reads MRKEKRDDKD…ITEQQSSINI (184 aa). Mg(2+) is bound by residues Asp-382 and Glu-384. Mn(2+) contacts are provided by Asp-382 and Glu-384. Zn(2+)-binding residues include Glu-392, Cys-499, His-502, and Cys-518. Residue Asp-522 participates in Mg(2+) binding. Residue Asp-522 participates in Mn(2+) binding.

The protein belongs to the arenaviridae nucleocapsid protein family. Homomultimerizes to form the nucleocapsid. Binds to viral genomic RNA. Interacts with glycoprotein G2. Interacts with protein Z; this interaction probably directs the encapsidated genome to budding sites. Interacts with protein L; this interaction does not interfere with Z-L interaction. Interacts with host IKBKE (via Protein kinase domain); the interaction inhibits IKBKE kinase activity.

The protein resides in the virion. It localises to the host cytoplasm. In terms of biological role, encapsidates the genome, protecting it from nucleases. The encapsidated genomic RNA is termed the nucleocapsid (NC). Serves as template for viral transcription and replication. The increased presence of protein N in host cell does not seem to trigger the switch from transcription to replication as observed in other negative strain RNA viruses. Through the interaction with host IKBKE, strongly inhibits the phosphorylation and nuclear translocation of host IRF3, a protein involved in interferon activation pathway, leading to the inhibition of interferon-beta and IRF3-dependent promoters activation. Also encodes a functional 3'-5' exoribonuclease that degrades preferentially dsRNA substrates and thereby participates in the suppression of interferon induction. In Lymphocytic choriomeningitis virus (strain Armstrong) (LCMV), this protein is Nucleoprotein.